A 717-amino-acid polypeptide reads, in one-letter code: Transport/processing ATP-binding protein ComA (717 aa).

The region spanning 11–138 (QVDQMDCGVA…EEWTGVTLFM (128 aa)) is the Peptidase C39 domain. Residue Cys-17 is part of the active site. 7 helical membrane passes run 18 to 38 (GVASLAMVFGYYGSYYFLAHL), 166 to 186 (GLIANIVLATLLVTVINIVGS), 205 to 225 (LGIISIGLVIVYILQQILSYA), 237 to 257 (LSIDVILSYIKHVFHLPMSFF), 281 to 301 (STILSIFLDVSTVVIISLVLF), 306 to 326 (NLFFMTLLALPIYTVIIFAFM), and 397 to 417 (VAHLLLNVGILWMGAVLVMDG). The 283-residue stretch at 168–450 (IANIVLATLL…IINLQTKLQT (283 aa)) folds into the ABC transmembrane type-1 domain. One can recognise an ABC transporter domain in the interval 484-717 (MTFKQVHYKY…GGFYAHLVNS (234 aa)). 517–524 (GISGSGKT) provides a ligand contact to ATP.

This sequence belongs to the ABC transporter superfamily. HlyB family.

Its subcellular location is the cell membrane. Functionally, required for induction of competence. Seems to transport the competence-stimulating peptide (CSP). This is Transport/processing ATP-binding protein ComA (comA) from Streptococcus pneumoniae (strain ATCC BAA-255 / R6).